Consider the following 110-residue polypeptide: Small ribosomal subunit protein bS6 (110 aa).

This sequence belongs to the bacterial ribosomal protein bS6 family.

Functionally, binds together with bS18 to 16S ribosomal RNA. The chain is Small ribosomal subunit protein bS6 (rpsF) from Aquifex aeolicus (strain VF5).